Consider the following 126-residue polypeptide: Protein ApaG (126 aa).

The ApaG domain maps to 2-126 (SDTQHQVNVR…FRLAVPGALH (125 aa)).

This Pseudomonas paraeruginosa (strain DSM 24068 / PA7) (Pseudomonas aeruginosa (strain PA7)) protein is Protein ApaG.